The following is a 430-amino-acid chain: Cytochrome c biogenesis protein CcsB (430 aa).

The next 3 helical transmembrane spans lie at 14-34, 72-92, and 162-182; these read LRLA…GTIL, SVWF…CSWR, and VGPL…AWGA.

It belongs to the Ccs1/CcsB family. As to quaternary structure, may interact with CcsA.

It localises to the cellular thylakoid membrane. Its function is as follows. Required during biogenesis of c-type cytochromes (cytochrome c6 and cytochrome f) at the step of heme attachment. The chain is Cytochrome c biogenesis protein CcsB from Synechococcus sp. (strain WH7803).